The primary structure comprises 123 residues: Small ribosomal subunit protein uS12 (123 aa).

Asp-89 bears the 3-methylthioaspartic acid mark. The tract at residues 104 to 123 (SVGVKDRKKSRSKYGAKRPK) is disordered. Basic residues predominate over residues 109–123 (DRKKSRSKYGAKRPK).

The protein belongs to the universal ribosomal protein uS12 family. As to quaternary structure, part of the 30S ribosomal subunit. Contacts proteins S8 and S17. May interact with IF1 in the 30S initiation complex.

Its function is as follows. With S4 and S5 plays an important role in translational accuracy. In terms of biological role, interacts with and stabilizes bases of the 16S rRNA that are involved in tRNA selection in the A site and with the mRNA backbone. Located at the interface of the 30S and 50S subunits, it traverses the body of the 30S subunit contacting proteins on the other side and probably holding the rRNA structure together. The combined cluster of proteins S8, S12 and S17 appears to hold together the shoulder and platform of the 30S subunit. The polypeptide is Small ribosomal subunit protein uS12 (Geotalea daltonii (strain DSM 22248 / JCM 15807 / FRC-32) (Geobacter daltonii)).